Consider the following 273-residue polypeptide: MEASMPKRKEPGKSLRIKVISMGNAEVGKSCIIKRYCEKRFVSKYLATIGIDYGVTKVQVRDREIKVNIFDMAGDPFFYEVRNEFYKDTQGVILVYDVGQKDSFDALDTWLAEMKQDLGPHGNMENIVFAVCANKIDCTKHRCVDESEGRLWAESKGFLYFETSAQTGEGINEMFQTFYLSIVDLCENGGKRPNTNSSASFTKEQADTIRRIRSSKDSWDMLGVKPGASRDEVNKAYRKLAVLLHPDKCVAPGSEDAFKAVVNARTALLKNIK.

Residues 1 to 18 (MEASMPKRKEPGKSLRIK) are required for interaction with MAPK1. Residues 23–30 (GNAEVGKS), 71–75 (DMAGD), and 134–137 (NKID) each bind GTP. The 57-residue stretch at 217–273 (DSWDMLGVKPGASRDEVNKAYRKLAVLLHPDKCVAPGSEDAFKAVVNARTALLKNIK) folds into the J domain.

Belongs to the small GTPase superfamily. Rab family. In terms of assembly, interacts directly with MAPK1 (wild-type and kinase-deficient forms). Interacts directly (in GTP-bound form) with MAP2K1 (wild-type and kinase-deficient forms).

Its subcellular location is the nucleus. GTPase which can activate the MEK/ERK pathway and induce cell transformation when overexpressed. May act as a nuclear scaffold for MAPK1, probably by association with MAPK1 nuclear export signal leading to enhanced ERK1/ERK2 signaling. This chain is DnaJ homolog subfamily C member 27 (DNAJC27), found in Bos taurus (Bovine).